Here is a 299-residue protein sequence, read N- to C-terminus: Pseudouridine-5'-phosphate glycosidase (299 aa).

The active-site Proton donor is the Glu-23. Residues Lys-84 and Val-104 each contribute to the substrate site. Asp-136 lines the Mn(2+) pocket. 138–140 contacts substrate; that stretch reads SAD. The active-site Nucleophile is the Lys-157.

The protein belongs to the pseudouridine-5'-phosphate glycosidase family. As to quaternary structure, homotrimer. Mn(2+) serves as cofactor.

The enzyme catalyses D-ribose 5-phosphate + uracil = psi-UMP + H2O. Functionally, catalyzes the reversible cleavage of pseudouridine 5'-phosphate (PsiMP) to ribose 5-phosphate and uracil. Functions biologically in the cleavage direction, as part of a pseudouridine degradation pathway. The protein is Pseudouridine-5'-phosphate glycosidase of Solibacter usitatus (strain Ellin6076).